Here is a 75-residue protein sequence, read N- to C-terminus: Pi-hexatoxin-Hi1b (75 aa).

6 cysteine pairs are disulfide-bonded: cysteine 3-cysteine 18, cysteine 10-cysteine 23, cysteine 17-cysteine 33, cysteine 40-cysteine 55, cysteine 47-cysteine 60, and cysteine 54-cysteine 71. 2 Domain repeats span residues 3 to 33 and 40 to 71; these read CIRK…FEVC and CLVK…SSVC. Positions 3 to 71 are 2 X approximate repeats with cysteine pattern C-C-CC-C-C; it reads CIRKWLSCVD…KRSGNKSSVC (69 aa).

This sequence belongs to the psalmotoxin-1 family. Double-knot toxin subfamily. Expressed by the venom gland.

Its subcellular location is the secreted. Functionally, this toxin potently and selectively inhibits ASIC1a, an isoform of the gene ASIC1. It incompletely inhibits ASIC1a activation in a pH-independent and slowly reversible manner. This toxin acts by binding to and stabilizing the closed state of the channel, thereby impeding the transition into a conducting state. This toxin may bind to the acidic pocket of ASIC1a, since mutation of a key residue of this pocket (Arg-350) abolishes the ability of the toxin to inhibit ASIC1a. In vivo, this toxin protects the brain from neuronal injury when administered up to 8 hours after stroke onset. This Hadronyche infensa (Fraser island funnel-web spider) protein is Pi-hexatoxin-Hi1b.